The sequence spans 114 residues: Large ribosomal subunit protein bL19 (114 aa).

This sequence belongs to the bacterial ribosomal protein bL19 family.

Its function is as follows. This protein is located at the 30S-50S ribosomal subunit interface and may play a role in the structure and function of the aminoacyl-tRNA binding site. The sequence is that of Large ribosomal subunit protein bL19 from Lactococcus lactis subsp. lactis (strain IL1403) (Streptococcus lactis).